A 334-amino-acid polypeptide reads, in one-letter code: Ribosomal RNA small subunit methyltransferase H (334 aa).

S-adenosyl-L-methionine-binding positions include 39–41 (GGH), Asp-59, Phe-83, Asp-100, and Gln-107. Residues 303 to 334 (ERTQAHGAERSDMRRAERPDARRAEHGEVLPP) form a disordered region.

This sequence belongs to the methyltransferase superfamily. RsmH family.

It localises to the cytoplasm. It catalyses the reaction cytidine(1402) in 16S rRNA + S-adenosyl-L-methionine = N(4)-methylcytidine(1402) in 16S rRNA + S-adenosyl-L-homocysteine + H(+). In terms of biological role, specifically methylates the N4 position of cytidine in position 1402 (C1402) of 16S rRNA. The sequence is that of Ribosomal RNA small subunit methyltransferase H from Verminephrobacter eiseniae (strain EF01-2).